Here is a 1603-residue protein sequence, read N- to C-terminus: Gag-Pol polyprotein (1603 aa).

Basic and acidic residues predominate over residues 124 to 141; the sequence is KGEEVGETTAQRDAKMAP. The disordered stretch occupies residues 124 to 144; that stretch reads KGEEVGETTAQRDAKMAPEKM. The PPXY motif motif lies at 172-175; it reads PPPY. The LYPX(n)L motif motif lies at 180–184; sequence LYPSL. The short motif at 219-229 is the Nuclear export signal element; the sequence is LTDWARIREEL. 2 consecutive CCHC-type zinc fingers follow at residues 507–524 and 533–550; these read GLCY…QCPK and ERCQ…QCRR. A disordered region spans residues 544-571; that stretch reads NAKQCRRRDGNQGQRPGKGLSSGSWPVS. The Peptidase A2 domain occupies 609-690; it reads ITALLDSGAD…VRGSILGRDC (82 aa). The For protease activity; shared with dimeric partner role is filled by Asp-614. Residues 750–938 form the Reverse transcriptase domain; it reads LQLGHIEPSL…PGVQYLGYKL (189 aa). Mg(2+) is bound by residues Asp-815, Asp-890, Asp-891, Asp-1158, Glu-1192, Asp-1213, and Asp-1272. The RNase H type-1 domain maps to 1149–1280; it reads PVPGPTAFTD…ADSQATFQAY (132 aa). An Integrase-type zinc finger spans residues 1280-1321; sequence YPLREAKDLHTALHIGPRALSKACNISMQQAREVVQTCPHCN. Positions 1289, 1293, 1317, and 1320 each coordinate Zn(2+). The Integrase catalytic domain occupies 1333–1496; it reads RGLGPLQIWQ…TPIQKHWRPT (164 aa). Positions 1344, 1401, and 1437 each coordinate Mg(2+). The integrase-type DNA-binding region spans 1502–1550; sequence PPVKIRIETGEWEKGWNVLVWGRGYAAVKNRDTDKVIWVPSRKVKPDVT. The involved in homooctamerization stretch occupies residues 1548–1567; the sequence is DVTQKDEVTKKDEASPLFAG. A disordered region spans residues 1566–1603; sequence AGISDWIPWEDEQEGLQGETASNKQERPGEDTLAANES.

In terms of assembly, active as a homodimer. As to quaternary structure, homodimer. Homomultimer. Homohexamer. Homodimer; further associates as a homooctamer. In terms of assembly, heterodimer of alpha and beta subunits. Three forms of RT exist: alpha-alpha (alpha-Pol), beta-beta (beta-Pol), and alpha-beta, with the major form being the heterodimer. Both the polymerase and RNase H active sites are located in the alpha subunit of heterodimeric RT alpha-beta. Mg(2+) is required as a cofactor. The cofactor is Mn(2+). In terms of processing, specific enzymatic cleavages in vivo yield mature proteins. Post-translationally, capsid protein p27: The cleavage at the C-terminus is slowly trimmed by the viral protease, sometimes being cut internally thereby generating the short version of the capsid protein and a capsid protein C-terminally extended by 3 amino acids in a ratio of 2:1.

It is found in the virion. The enzyme catalyses DNA(n) + a 2'-deoxyribonucleoside 5'-triphosphate = DNA(n+1) + diphosphate. It catalyses the reaction Endonucleolytic cleavage to 5'-phosphomonoester.. In terms of biological role, capsid protein p27: Self-associates to form the irregular polyhedron core composed of hexamers and pentamers, that encapsulates the genomic RNA-nucleocapsid complex. Assembles as a tube in vitro. Binds to inositol hexakisphosphate (IP6), which allows the assembly of the polyhedral capsid. Its function is as follows. Spacer peptide: Plays a role in the oligomerization of the Gag polyprotein and in the stabilization of the immature particle. Essential layering element during tube assembly. Binds strongly to viral nucleic acids and promotes their packaging. Plays a role in the maturation-stabilization of the viral dimeric RNA via highly structured zinc-binding motifs. Functionally, the aspartyl protease that mediates proteolytic cleavages of Gag and Gag-Pol polyproteins during or shortly after the release of the virion from the plasma membrane. Cleavages take place as an ordered, step-wise cascade to yield mature proteins. This process is called maturation. Displays maximal activity during the budding process just prior to particle release from the cell. In terms of biological role, catalyzes viral DNA integration into the host chromosome, by performing a series of DNA cutting and joining reactions. This recombination event is an essential step in the viral replication cycle. Has a strong preference for using the 3'-OH at the viral DNA end as a nucleophile. The protein is Gag-Pol polyprotein (gag-pol) of Avian leukosis virus subgroup A (isolate RSA) (ALV-A RSA).